The sequence spans 143 residues: Large ribosomal subunit protein uL15 (143 aa).

A disordered region spans residues 1–47 (MKLHELTPSEGSRFSRRRIGRGDSSGQGKTSGRGQKGQKARGKVRVG). Residues 23–35 (DSSGQGKTSGRGQ) show a composition bias toward gly residues.

Belongs to the universal ribosomal protein uL15 family. As to quaternary structure, part of the 50S ribosomal subunit.

In terms of biological role, binds to the 23S rRNA. The protein is Large ribosomal subunit protein uL15 of Lactiplantibacillus plantarum (strain ATCC BAA-793 / NCIMB 8826 / WCFS1) (Lactobacillus plantarum).